The chain runs to 344 residues: Methionine import ATP-binding protein MetN 1 (344 aa).

The 240-residue stretch at 2-241 (IEIRNLSQRF…PHHEVTRALI (240 aa)) folds into the ABC transporter domain. Residue 38-45 (GRSGAGKS) coordinates ATP.

The protein belongs to the ABC transporter superfamily. Methionine importer (TC 3.A.1.24) family. As to quaternary structure, the complex is composed of two ATP-binding proteins (MetN), two transmembrane proteins (MetI) and a solute-binding protein (MetQ).

The protein localises to the cell inner membrane. It carries out the reaction L-methionine(out) + ATP + H2O = L-methionine(in) + ADP + phosphate + H(+). It catalyses the reaction D-methionine(out) + ATP + H2O = D-methionine(in) + ADP + phosphate + H(+). Part of the ABC transporter complex MetNIQ involved in methionine import. Responsible for energy coupling to the transport system. This chain is Methionine import ATP-binding protein MetN 1, found in Burkholderia mallei (strain ATCC 23344).